A 1020-amino-acid chain; its full sequence is Sodium/potassium-transporting ATPase subunit alpha-2 (1020 aa).

A propeptide spanning residues 1-5 (MGRGA) is cleaved from the precursor. A disordered region spans residues 1–31 (MGRGAGREYSPAATTAENGGGKKKQKEKELD). The Cytoplasmic portion of the chain corresponds to 6–85 (GREYSPAATT…NALTPPPTTP (80 aa)). Serine 10 bears the Phosphoserine mark. The tract at residues 80 to 82 (PPP) is interaction with phosphoinositide-3 kinase. Residues 86 to 106 (EWVKFCRQLFGGFSILLWIGA) form a helical membrane-spanning segment. At 107-129 (ILCFLAYGIQAAMEDEPSNDNLY) the chain is on the extracellular side. Residues 130 to 150 (LGVVLAAVVIVTGCFSYYQEA) form a helical membrane-spanning segment. Residues 151–286 (KSSKIMDSFK…VGRTPIAMEI (136 aa)) are Cytoplasmic-facing. Positions 212–227 (DNSSLTGESEPQTRSP) are enriched in polar residues. A disordered region spans residues 212 to 231 (DNSSLTGESEPQTRSPEFTH). Residues 287 to 306 (EHFIQLITGVAVFLGVSFFV) traverse the membrane as a helical segment. Over 307 to 318 (LSLILGYSWLEA) the chain is Extracellular. Residues 319–336 (VIFLIGIIVANVPEGLLA) form a helical membrane-spanning segment. Over 337–769 (TVTVCLTLTA…EEGRLIFDNL (433 aa)) the chain is Cytoplasmic. Aspartate 374 acts as the 4-aspartylphosphate intermediate in catalysis. Phosphoserine is present on residues serine 439, serine 450, serine 496, and serine 559. Phosphothreonine is present on threonine 570. A phosphoserine mark is found at serine 587 and serine 672. Mg(2+) contacts are provided by aspartate 714 and aspartate 718. Residues 770-789 (KKSIAYTLTSNIPEITPFLL) form a helical membrane-spanning segment. The Extracellular portion of the chain corresponds to 790 to 799 (FIIANIPLPL). A helical membrane pass occupies residues 800 to 820 (GTVTILCIDLGTDMVPAISLA). Topologically, residues 821–840 (YEAAESDIMKRQPRNSQTDK) are cytoplasmic. The residue at position 826 (serine 826) is a Phosphoserine. The helical transmembrane segment at 841–863 (LVNERLISMAYGQIGMIQALGGF) threads the bilayer. Residues 864-915 (FTYFVILAENGFLPSRLLGIRLDWDDRTMNDLEDSYGQEWTYEQRKVVEFTC) lie on the Extracellular side of the membrane. Residues 916 to 935 (HTAFFASIVVVQWADLIICK) traverse the membrane as a helical segment. Residues 936-948 (TRRNSVFQQGMKN) lie on the Cytoplasmic side of the membrane. A Phosphoserine; by PKA modification is found at serine 940. Residues 949–967 (KILIFGLLEETALAAFLSY) traverse the membrane as a helical segment. The Extracellular segment spans residues 968-982 (CPGMGVALRMYPLKV). The chain crosses the membrane as a helical span at residues 983–1003 (TWWFCAFPYSLLIFIYDEVRK). Residues 1004–1020 (LILRRYPGGWVEKETYY) are Cytoplasmic-facing.

It belongs to the cation transport ATPase (P-type) (TC 3.A.3) family. Type IIC subfamily. The sodium/potassium-transporting ATPase is composed of a catalytic alpha subunit, an auxiliary non-catalytic beta subunit and an additional regulatory subunit. Interacts with regulatory subunit FXYD1.

The protein resides in the membrane. Its subcellular location is the cell membrane. It carries out the reaction K(+)(out) + Na(+)(in) + ATP + H2O = K(+)(in) + Na(+)(out) + ADP + phosphate + H(+). This is the catalytic component of the active enzyme, which catalyzes the hydrolysis of ATP coupled with the exchange of sodium and potassium ions across the plasma membrane. This action creates the electrochemical gradient of sodium and potassium, providing the energy for active transport of various nutrients. The polypeptide is Sodium/potassium-transporting ATPase subunit alpha-2 (ATP1A2) (Homo sapiens (Human)).